We begin with the raw amino-acid sequence, 1388 residues long: DNA-directed RNA polymerase subunit beta' (1388 aa).

4 residues coordinate Zn(2+): Cys-65, Cys-67, Cys-80, and Cys-83. Asp-456, Asp-458, and Asp-460 together coordinate Mg(2+). 4 residues coordinate Zn(2+): Cys-812, Cys-887, Cys-894, and Cys-897.

It belongs to the RNA polymerase beta' chain family. The RNAP catalytic core consists of 2 alpha, 1 beta, 1 beta' and 1 omega subunit. When a sigma factor is associated with the core the holoenzyme is formed, which can initiate transcription. The cofactor is Mg(2+). Requires Zn(2+) as cofactor.

The catalysed reaction is RNA(n) + a ribonucleoside 5'-triphosphate = RNA(n+1) + diphosphate. DNA-dependent RNA polymerase catalyzes the transcription of DNA into RNA using the four ribonucleoside triphosphates as substrates. The polypeptide is DNA-directed RNA polymerase subunit beta' (Protochlamydia amoebophila (strain UWE25)).